A 251-amino-acid polypeptide reads, in one-letter code: Probable-ribose 5-phosphate isomerase (251 aa).

The protein belongs to the ribose 5-phosphate isomerase family.

It carries out the reaction aldehydo-D-ribose 5-phosphate = D-ribulose 5-phosphate. It participates in carbohydrate degradation; pentose phosphate pathway; D-ribose 5-phosphate from D-ribulose 5-phosphate (non-oxidative stage): step 1/1. In Caenorhabditis elegans, this protein is Probable-ribose 5-phosphate isomerase (rpia-1).